Here is a 282-residue protein sequence, read N- to C-terminus: RsbT co-antagonist protein RsbRC (282 aa).

Serine 165 and serine 174 each carry phosphoserine. The STAS domain occupies 165–276 (SAPVIVLFHS…STLASAIASD (112 aa)). Phosphothreonine is present on threonine 186.

As to quaternary structure, probably present in the stressosome with RsbRA, RsbRB, RsbRD and RsbS. In terms of processing, phosphorylated by RsbT.

Functionally, one of 4 functionally non-identical RsbR paralogs, it functions in the environmental signaling branch of the general stress response. Negative regulator of sigma-B activity. Non-phosphorylated RsbS binds to RsbT, preventing its association with RsbU. Requires any one of RsbRA, RsbRB, RsbRC or RsbRD to sequester RsbT. When RsbS and the RsbR paralog(s) are phosphorylated, they release RsbT, which can then bind and activate RsbU. This Bacillus subtilis (strain 168) protein is RsbT co-antagonist protein RsbRC (rsbRC).